The sequence spans 114 residues: N(4)-acetylcytidine amidohydrolase (114 aa).

The ASCH domain occupies 8-93; sequence TFFEFLTPLV…ALIQEIYPNI (86 aa). The active-site Proton acceptor is lysine 22. The active-site Nucleophile is threonine 25. Glutamate 75 (proton donor) is an active-site residue.

It belongs to the N(4)-acetylcytidine amidohydrolase family.

The enzyme catalyses N(4)-acetylcytidine + H2O = cytidine + acetate + H(+). It catalyses the reaction N(4)-acetyl-2'-deoxycytidine + H2O = 2'-deoxycytidine + acetate + H(+). It carries out the reaction N(4)-acetylcytosine + H2O = cytosine + acetate + H(+). Catalyzes the hydrolysis of N(4)-acetylcytidine (ac4C). This is N(4)-acetylcytidine amidohydrolase from Vibrio cholerae serotype O1 (strain ATCC 39541 / Classical Ogawa 395 / O395).